The primary structure comprises 181 residues: Adenylate kinase (181 aa).

Gly10–Thr15 serves as a coordination point for ATP. The tract at residues Ser30–Val59 is NMP. AMP contacts are provided by residues Thr31, Arg36, Asp57–Val59, Gly85–Arg88, and Gln92. The LID stretch occupies residues Ala126–Asp132. Arg127 contributes to the ATP binding site. Positions 129 and 140 each coordinate AMP. Position 166 (Gly166) interacts with ATP.

The protein belongs to the adenylate kinase family. In terms of assembly, monomer.

Its subcellular location is the cytoplasm. It carries out the reaction AMP + ATP = 2 ADP. It participates in purine metabolism; AMP biosynthesis via salvage pathway; AMP from ADP: step 1/1. Catalyzes the reversible transfer of the terminal phosphate group between ATP and AMP. Plays an important role in cellular energy homeostasis and in adenine nucleotide metabolism. The polypeptide is Adenylate kinase (Mycolicibacterium paratuberculosis (strain ATCC BAA-968 / K-10) (Mycobacterium paratuberculosis)).